The chain runs to 284 residues: Nucleotide-binding protein SO_3964 (284 aa).

8–15 (GRSGSGKS) contributes to the ATP binding site. 56–59 (DVRN) contacts GTP.

This sequence belongs to the RapZ-like family.

Functionally, displays ATPase and GTPase activities. The polypeptide is Nucleotide-binding protein SO_3964 (Shewanella oneidensis (strain ATCC 700550 / JCM 31522 / CIP 106686 / LMG 19005 / NCIMB 14063 / MR-1)).